A 285-amino-acid chain; its full sequence is GTP-binding protein 8 (285 aa).

In terms of domain architecture, EngB-type G spans 110–283 (QQPEVCFIGR…KCFIADITGS (174 aa)). GTP contacts are provided by residues 118–125 (GRSNVGKS), 147–151 (GHTKK), 165–168 (DMPG), 227–230 (TKID), and 262–264 (ISA). Mg(2+)-binding residues include Ser125 and Thr149.

It belongs to the TRAFAC class TrmE-Era-EngA-EngB-Septin-like GTPase superfamily. EngB GTPase family. Requires Mg(2+) as cofactor.

This Mus musculus (Mouse) protein is GTP-binding protein 8 (Gtpbp8).